Here is a 496-residue protein sequence, read N- to C-terminus: Inosine-5'-monophosphate dehydrogenase (496 aa).

2 CBS domains span residues 96–152 (VIKD…TKKV) and 156–212 (MTKD…PQAA). NAD(+) is bound by residues Asp247 and 299 to 301 (GIG). K(+) is bound by residues Gly301 and Gly303. IMP is bound at residue Ser304. K(+) is bound at residue Cys306. The active-site Thioimidate intermediate is the Cys306. IMP is bound by residues 339 to 341 (DGG), 362 to 363 (GS), and 386 to 390 (YRGMG). Arg405 serves as the catalytic Proton acceptor. An IMP-binding site is contributed by Glu423. K(+)-binding residues include Glu477, Ser478, and His479.

It belongs to the IMPDH/GMPR family. As to quaternary structure, homotetramer. Requires K(+) as cofactor.

The catalysed reaction is IMP + NAD(+) + H2O = XMP + NADH + H(+). It functions in the pathway purine metabolism; XMP biosynthesis via de novo pathway; XMP from IMP: step 1/1. Mycophenolic acid (MPA) is a non-competitive inhibitor that prevents formation of the closed enzyme conformation by binding to the same site as the amobile flap. In contrast, mizoribine monophosphate (MZP) is a competitive inhibitor that induces the closed conformation. MPA is a potent inhibitor of mammalian IMPDHs but a poor inhibitor of the bacterial enzymes. MZP is a more potent inhibitor of bacterial IMPDH. Its function is as follows. Catalyzes the conversion of inosine 5'-phosphate (IMP) to xanthosine 5'-phosphate (XMP), the first committed and rate-limiting step in the de novo synthesis of guanine nucleotides, and therefore plays an important role in the regulation of cell growth. The protein is Inosine-5'-monophosphate dehydrogenase of Methanocaldococcus jannaschii (strain ATCC 43067 / DSM 2661 / JAL-1 / JCM 10045 / NBRC 100440) (Methanococcus jannaschii).